A 684-amino-acid polypeptide reads, in one-letter code: Sorbicillinoid biosynthetic cluster transcription factor 2 (684 aa).

A disordered region spans residues 114-151 (ISSAPSLETPPESVAASPPTVDSIPVSHHVNEDPEAEP).

The protein resides in the nucleus. Transcription factor that acts in concert with sorR1 which is a transcriptional activator of the gene cluster that mediates the biosynthesis of sorbicillinoids, a diverse group of yellow secondary metabolites that restrict growth of competing pathogenic fungi but not of bacteria. The polypeptide is Sorbicillinoid biosynthetic cluster transcription factor 2 (Penicillium rubens (strain ATCC 28089 / DSM 1075 / NRRL 1951 / Wisconsin 54-1255) (Penicillium chrysogenum)).